The following is an 84-amino-acid chain: uncharacterized protein (84 aa).

This is an uncharacterized protein from Orgyia pseudotsugata (Douglas-fir tussock moth).